Reading from the N-terminus, the 71-residue chain is Small ribosomal subunit protein bS21 (71 aa).

Over residues 48–59 (KAAAAVKRHAKK) the composition is skewed to basic residues. Positions 48–71 (KAAAAVKRHAKKVQREQRRRERLY) are disordered. Basic and acidic residues predominate over residues 60–71 (VQREQRRRERLY).

Belongs to the bacterial ribosomal protein bS21 family.

The protein is Small ribosomal subunit protein bS21 of Azotobacter vinelandii (strain DJ / ATCC BAA-1303).